The following is a 199-amino-acid chain: NAD(P)H dehydrogenase (quinone) (199 aa).

Positions 4-190 constitute a Flavodoxin-like domain; sequence ILVLYYSMYG…TIARYQGEHV (187 aa). Residues 10-15 and 79-81 each bind FMN; these read SMYGHI and TRF. Residue Tyr12 participates in NAD(+) binding. A substrate-binding site is contributed by Trp99. FMN contacts are provided by residues 114–119 and His134; that span reads STGTGG.

Belongs to the WrbA family. It depends on FMN as a cofactor.

It carries out the reaction a quinone + NADH + H(+) = a quinol + NAD(+). The catalysed reaction is a quinone + NADPH + H(+) = a quinol + NADP(+). This is NAD(P)H dehydrogenase (quinone) from Serratia proteamaculans (strain 568).